Reading from the N-terminus, the 347-residue chain is D-alanine--D-alanine ligase (347 aa).

The ATP-grasp domain occupies 133-342; that stretch reads KQAFAQASLP…FPDLVHRLIQ (210 aa). 169–224 contacts ATP; the sequence is ETELGYPCFVKPANLGSSVGIAKVRDRAELEAALDQAAALDRRLIIEAAIDNPREV. Mg(2+) is bound by residues D296, E309, and N311.

This sequence belongs to the D-alanine--D-alanine ligase family. The cofactor is Mg(2+). Mn(2+) serves as cofactor.

The protein resides in the cytoplasm. The enzyme catalyses 2 D-alanine + ATP = D-alanyl-D-alanine + ADP + phosphate + H(+). It participates in cell wall biogenesis; peptidoglycan biosynthesis. Cell wall formation. This is D-alanine--D-alanine ligase from Synechococcus elongatus (strain ATCC 33912 / PCC 7942 / FACHB-805) (Anacystis nidulans R2).